The chain runs to 655 residues: A-type voltage-gated potassium channel KCND3 (655 aa).

Over 1 to 182 (MAAGVAAWLP…FENPHTSTLA (182 aa)) the chain is Cytoplasmic. Residues 6-21 (AAWLPFARAAAIGWMP) form an interaction with KCNIP1 and KCNIP2 region. Positions 70–78 (EKEFFFNED) are interaction with KCNIP1. Positions 104, 110, 131, and 132 each coordinate Zn(2+). Ser153 is subject to Phosphoserine. The chain crosses the membrane as a helical span at residues 183–204 (LVFYYVTGFFIAVSVITNVVET). At 205 to 223 (VPCGTVPGSKELPCGERYS) the chain is on the extracellular side. A helical membrane pass occupies residues 224–246 (VAFFCLDTACVMIFTVEYLLRLF). Over 247 to 253 (AAPSRYR) the chain is Cytoplasmic. Residues 254–277 (FIRSVMSIIDVVAIMPYYIGLVMT) traverse the membrane as a helical segment. Residues 278 to 283 (NNEDVS) lie on the Extracellular side of the membrane. The helical; Voltage-sensor transmembrane segment at 284 to 306 (GAFVTLRVFRVFRIFKFSRHSQG) threads the bilayer. Residues 307-318 (LRILGYTLKSCA) are Cytoplasmic-facing. A helical transmembrane segment spans residues 319 to 343 (SELGFLLFSLTMAIIIFATVMFYAE). Residues 344-352 (KGSSASKFT) lie on the Extracellular side of the membrane. An intramembrane region (helical) is located at residues 353 to 366 (SIPASFWYTIVTMT). Positions 367, 368, 369, and 370 each coordinate K(+). A Selectivity filter motif is present at residues 367 to 372 (TLGYGD). An intramembrane segment occupies 367 to 374 (TLGYGDMV). A helical membrane pass occupies residues 378 to 400 (IAGKIFGSICSLSGVLVIALPVP). The Cytoplasmic portion of the chain corresponds to 401–655 (VIVSNFSRIY…ASNVVKVSVL (255 aa)). A Phosphothreonine modification is found at Thr459. The interval 470–487 (SLIESQHHHLLHCLEKTT) is interaction with KCNIP1 and KCNIP2. Positions 472 to 487 (IESQHHHLLHCLEKTT) are mediates dendritic targeting. Ser569 is modified (phosphoserine; by CaMK2D). Phosphoserine is present on Ser585. Residues 618–644 (PAPPALTPEGETRPPPASPGPNTNIPS) are disordered.

This sequence belongs to the potassium channel family. D (Shal) (TC 1.A.1.2) subfamily. Kv4.3/KCND3 sub-subfamily. Homotetramer. Heterotetramer with KCND2. Associates with the regulatory subunits KCNIP3 and KCNIP4. Interacts with KCNE1, KCNE2, SCN1B and KCNAB1 and DLG1. Component of heteromultimeric potassium channels. Identified in potassium channel complexes containing KCND1, KCND2, KCND3, KCNIP1, KCNIP2, KCNIP3, KCNIP4, DPP6 and DPP10. Interacts with KCNIP1; each KCNIP1 monomer interacts with two adjacent KCND3 subunits, through both the N-terminal inactivation ball of a KCND3 subunit and a C-terminal helix from the adjacent KCND3 subunit, clamping them together; this interaction stabilizes the tetrameric form and modulates the channel gating kinetics namely channel activation and inactivation kinetics and rate of recovery from inactivation. Interacts with DPP6; this interaction modulates the channel gating kinetics namely channel activation and inactivation kinetics and rate of recovery from inactivation. Interacts with KCNIP2; each KCNIP2 monomer interacts with two adjacent KCND3 subunits, through both the N-terminal inactivation ball of a KCND3 subunit and a C-terminal helix from the adjacent KCND3 subunit, clamping them together; this interaction modulates the channel gating kinetics. Regulated through phosphorylation at Ser-569 by CaMK2D. In terms of tissue distribution, detected in carotid body chemoreceptor cells and in frontal cortex.

The protein localises to the cell membrane. It is found in the sarcolemma. The protein resides in the cell projection. It localises to the dendrite. The enzyme catalyses K(+)(in) = K(+)(out). Its function is as follows. Pore-forming (alpha) subunit of voltage-gated A-type potassium channels that mediates transmembrane potassium transport in excitable membranes, in brain and heart. In cardiomyocytes, may generate the transient outward potassium current I(To). In neurons, may conduct the transient subthreshold somatodendritic A-type potassium current (ISA). Kinetics properties are characterized by fast activation at subthreshold membrane potentials, rapid inactivation, and quick recovery from inactivation. Channel properties are modulated by interactions with regulatory subunits. Interaction with the regulatory subunits KCNIP1 or KCNIP2 modulates the channel gating kinetics namely channel activation and inactivation kinetics and rate of recovery from inactivation. Likewise, interaction with DPP6 modulates the channel gating kinetics namely channel activation and inactivation kinetics. The sequence is that of A-type voltage-gated potassium channel KCND3 from Oryctolagus cuniculus (Rabbit).